A 605-amino-acid chain; its full sequence is Elongation factor 4 (605 aa).

The tr-type G domain maps to 11–193 (KNIRNFSIIA…TLVDVIPAPT (183 aa)). Residues 23-28 (DHGKST) and 140-143 (NKID) contribute to the GTP site.

It belongs to the TRAFAC class translation factor GTPase superfamily. Classic translation factor GTPase family. LepA subfamily.

It is found in the cell inner membrane. The enzyme catalyses GTP + H2O = GDP + phosphate + H(+). Functionally, required for accurate and efficient protein synthesis under certain stress conditions. May act as a fidelity factor of the translation reaction, by catalyzing a one-codon backward translocation of tRNAs on improperly translocated ribosomes. Back-translocation proceeds from a post-translocation (POST) complex to a pre-translocation (PRE) complex, thus giving elongation factor G a second chance to translocate the tRNAs correctly. Binds to ribosomes in a GTP-dependent manner. The protein is Elongation factor 4 of Acinetobacter baumannii (strain AB307-0294).